The chain runs to 452 residues: Bis(5'-adenosyl)-triphosphatase enpp4 (452 aa).

A signal peptide spans 1–19 (MFGRVFIVAVLYCITICKG). Residues 20–407 (EDPTNSSTPK…NQWCIQVSEA (388 aa)) are Extracellular-facing. Asn-24 carries N-linked (GlcNAc...) asparagine glycosylation. Asp-36 and Thr-72 together coordinate Zn(2+). The AMP-threonine intermediate role is filled by Thr-72. Asn-93 contributes to the substrate binding site. Asn-107 carries an N-linked (GlcNAc...) asparagine glycan. Tyr-154 is a binding site for substrate. N-linked (GlcNAc...) asparagine glycosylation is found at Asn-155 and Asn-175. Zn(2+) is bound by residues Asp-189 and His-193. Asp-189 provides a ligand contact to substrate. Residue Asn-202 is glycosylated (N-linked (GlcNAc...) asparagine). Residues Asp-237 and His-238 each contribute to the Zn(2+) site. A disulfide bridge connects residues Cys-254 and Cys-287. Asn-259 and Asn-327 each carry an N-linked (GlcNAc...) asparagine glycan. A Zn(2+)-binding site is contributed by His-336. The N-linked (GlcNAc...) asparagine glycan is linked to Asn-386. A disulfide bridge connects residues Cys-394 and Cys-401. The chain crosses the membrane as a helical span at residues 408-428 (IGIVIGAIMVLTTLTCIIIML). At 429 to 452 (KKKMPSARPFSRLQFQDDDDPLIG) the chain is on the cytoplasmic side.

It belongs to the nucleotide pyrophosphatase/phosphodiesterase family. Zn(2+) is required as a cofactor.

It is found in the cell membrane. It carries out the reaction P(1),P(3)-bis(5'-adenosyl) triphosphate + H2O = AMP + ADP + 2 H(+). Hydrolyzes extracellular Ap3A into AMP and ADP, and Ap4A into AMP and ATP. Ap3A and Ap4A are diadenosine polyphosphates thought to induce proliferation of vascular smooth muscle cells. Acts as a procoagulant, mediating platelet aggregation at the site of nascent thrombus via release of ADP from Ap3A and activation of ADP receptors. The polypeptide is Bis(5'-adenosyl)-triphosphatase enpp4 (enpp4) (Xenopus laevis (African clawed frog)).